We begin with the raw amino-acid sequence, 441 residues long: Importin subunit alpha-8 (441 aa).

ARM repeat units follow at residues 39-79, 80-118, 121-158, 160-199, 202-241, 244-284, 287-326, and 330-370; these read QRDI…NIAV, DNPGVVVNNNAVPVLIQLIASPKDYVREQAIWTLSNVAG, IHYRDFVLNSGVLMPLLRLLYKDTTLRIATWALRNLCR, KPHPAFDQVKPALPALEILLHSHDEDVLKNACMALCHLSE, EDGIQSVIEAGFVPKLVQILQLPSPVVLVPALLTIGAMTA, HQQT…NITA, KEQIQSVIDANLIPILVNLAQDTDFYMKKEAVWAISNMAL, and HDQI…NMLK.

This sequence belongs to the importin alpha family. As to quaternary structure, forms a complex with importin subunit beta-1.

It is found in the nucleus envelope. Its function is as follows. Binds to conventional NLS motifs and mediates nuclear protein import across the nuclear envelope. The chain is Importin subunit alpha-8 from Arabidopsis thaliana (Mouse-ear cress).